The chain runs to 215 residues: Probable phosphoglycerate mutase GpmB (215 aa).

Substrate is bound by residues 8-15 (RHGETQWN), 21-22 (QG), R58, K60, 82-85 (ELDM), 104-105 (RR), and 151-152 (GI). The Tele-phosphohistidine intermediate role is filled by H9. E82 (proton donor/acceptor) is an active-site residue.

The protein belongs to the phosphoglycerate mutase family. GpmB subfamily.

It catalyses the reaction (2R)-2-phosphoglycerate = (2R)-3-phosphoglycerate. It functions in the pathway carbohydrate degradation; glycolysis; pyruvate from D-glyceraldehyde 3-phosphate: step 3/5. This is Probable phosphoglycerate mutase GpmB from Salmonella paratyphi A (strain AKU_12601).